A 113-amino-acid polypeptide reads, in one-letter code: Cell division protein FtsB (113 aa).

At 1-3 (MRL) the chain is on the cytoplasmic side. The chain crosses the membrane as a helical span at residues 4 to 21 (ISLLLFVLLLAIQYPLWL). The Periplasmic portion of the chain corresponds to 22–113 (GKGGWLRVWD…PNSVAGRGGH (92 aa)). A coiled-coil region spans residues 34 to 64 (RQVNEQTVHNQALKLRNAKLEGEVKDLQDGT). The segment at 93-113 (KVSATPPLPPPPNSVAGRGGH) is disordered.

This sequence belongs to the FtsB family. As to quaternary structure, part of a complex composed of FtsB, FtsL and FtsQ.

Its subcellular location is the cell inner membrane. In terms of biological role, essential cell division protein. May link together the upstream cell division proteins, which are predominantly cytoplasmic, with the downstream cell division proteins, which are predominantly periplasmic. The chain is Cell division protein FtsB from Cupriavidus metallidurans (strain ATCC 43123 / DSM 2839 / NBRC 102507 / CH34) (Ralstonia metallidurans).